Consider the following 317-residue polypeptide: Forkhead box protein B2 (317 aa).

Residues 13–107 constitute a DNA-binding region (fork-head); it reads KPPYSYISLT…ENGSFLRRRK (95 aa).

First expressed within the dorsolateral ectoderm, except for the organizer territory. During gastrulation, expressed in 2 ectodermal stripes adjacent to the dorsal midline. With the onset of neurulation, expression shifts first to the neural plate before settling on the bottom of the neural tube, on top of the notochord. Expression is then absent until stage 35, at which stage a pair of cells in the fourth rhombomere in the dorsolateral outer area of the rhombencephalon show expression. This is followed shortly afterwards by expression in a pair of cells in rhombomere 6 at the ventricular side of the rhombencephalon.

The protein localises to the nucleus. In terms of biological role, transcription factor. In Xenopus laevis (African clawed frog), this protein is Forkhead box protein B2.